A 477-amino-acid chain; its full sequence is Sucrose-6-phosphate hydrolase (477 aa).

Substrate is bound by residues 36 to 39 (WMND), Q55, W63, 98 to 99 (FS), 160 to 161 (RD), E215, and W298. D39 is a catalytic residue.

This sequence belongs to the glycosyl hydrolase 32 family.

It localises to the cytoplasm. It carries out the reaction Hydrolysis of terminal non-reducing beta-D-fructofuranoside residues in beta-D-fructofuranosides.. The protein operates within glycan biosynthesis; sucrose metabolism. Its function is as follows. Enables the bacterium to metabolize sucrose as a sole carbon source. The polypeptide is Sucrose-6-phosphate hydrolase (cscA) (Escherichia coli).